The primary structure comprises 396 residues: Proteasome-activating nucleotidase (396 aa).

The stretch at 16-57 (ITYLKRRIRQLELQVRMLEADKERLERELSRLRSEMSRLRQP) forms a coiled coil. Residues 181–186 (GCGKTL) and His320 each bind ATP. A docks into pockets in the proteasome alpha-ring to cause gate opening region spans residues 394–396 (IYG).

The protein belongs to the AAA ATPase family. As to quaternary structure, homohexamer. The hexameric complex has a two-ring architecture resembling a top hat that caps the 20S proteasome core at one or both ends. Upon ATP-binding, the C-terminus of PAN interacts with the alpha-rings of the proteasome core by binding to the intersubunit pockets.

Its subcellular location is the cytoplasm. ATPase which is responsible for recognizing, binding, unfolding and translocation of substrate proteins into the archaeal 20S proteasome core particle. Is essential for opening the gate of the 20S proteasome via an interaction with its C-terminus, thereby allowing substrate entry and access to the site of proteolysis. Thus, the C-termini of the proteasomal ATPase function like a 'key in a lock' to induce gate opening and therefore regulate proteolysis. Unfolding activity requires energy from ATP hydrolysis, whereas ATP binding alone promotes ATPase-20S proteasome association which triggers gate opening, and supports translocation of unfolded substrates. The chain is Proteasome-activating nucleotidase from Pyrococcus abyssi (strain GE5 / Orsay).